Reading from the N-terminus, the 302-residue chain is uncharacterized protein (302 aa).

The active site involves glutamate 48.

It belongs to the PhzF family.

This is an uncharacterized protein from Clostridium acetobutylicum (strain ATCC 824 / DSM 792 / JCM 1419 / IAM 19013 / LMG 5710 / NBRC 13948 / NRRL B-527 / VKM B-1787 / 2291 / W).